Consider the following 890-residue polypeptide: Alanine--tRNA ligase (890 aa).

Zn(2+) is bound by residues histidine 568, histidine 572, cysteine 680, and histidine 684.

This sequence belongs to the class-II aminoacyl-tRNA synthetase family. Zn(2+) is required as a cofactor.

The protein resides in the cytoplasm. The enzyme catalyses tRNA(Ala) + L-alanine + ATP = L-alanyl-tRNA(Ala) + AMP + diphosphate. Catalyzes the attachment of alanine to tRNA(Ala) in a two-step reaction: alanine is first activated by ATP to form Ala-AMP and then transferred to the acceptor end of tRNA(Ala). Also edits incorrectly charged Ser-tRNA(Ala) and Gly-tRNA(Ala) via its editing domain. This Psychrobacter cryohalolentis (strain ATCC BAA-1226 / DSM 17306 / VKM B-2378 / K5) protein is Alanine--tRNA ligase.